Consider the following 484-residue polypeptide: Aspartyl/glutamyl-tRNA(Asn/Gln) amidotransferase subunit B (484 aa).

It belongs to the GatB/GatE family. GatB subfamily. In terms of assembly, heterotrimer of A, B and C subunits.

The enzyme catalyses L-glutamyl-tRNA(Gln) + L-glutamine + ATP + H2O = L-glutaminyl-tRNA(Gln) + L-glutamate + ADP + phosphate + H(+). It catalyses the reaction L-aspartyl-tRNA(Asn) + L-glutamine + ATP + H2O = L-asparaginyl-tRNA(Asn) + L-glutamate + ADP + phosphate + 2 H(+). Allows the formation of correctly charged Asn-tRNA(Asn) or Gln-tRNA(Gln) through the transamidation of misacylated Asp-tRNA(Asn) or Glu-tRNA(Gln) in organisms which lack either or both of asparaginyl-tRNA or glutaminyl-tRNA synthetases. The reaction takes place in the presence of glutamine and ATP through an activated phospho-Asp-tRNA(Asn) or phospho-Glu-tRNA(Gln). The sequence is that of Aspartyl/glutamyl-tRNA(Asn/Gln) amidotransferase subunit B from Bordetella bronchiseptica (strain ATCC BAA-588 / NCTC 13252 / RB50) (Alcaligenes bronchisepticus).